The sequence spans 192 residues: Small ribosomal subunit protein uS4B (192 aa).

An S4 RNA-binding domain is found at 83-145 (RRLDNLVYRL…SRKIQTYASN (63 aa)).

This sequence belongs to the universal ribosomal protein uS4 family. Part of the 30S ribosomal subunit. Contacts protein S5. The interaction surface between S4 and S5 is involved in control of translational fidelity.

Its function is as follows. One of the primary rRNA binding proteins, it binds directly to 16S rRNA where it nucleates assembly of the body of the 30S subunit. In terms of biological role, with S5 and S12 plays an important role in translational accuracy. This chain is Small ribosomal subunit protein uS4B (rpsD2), found in Clostridium acetobutylicum (strain ATCC 824 / DSM 792 / JCM 1419 / IAM 19013 / LMG 5710 / NBRC 13948 / NRRL B-527 / VKM B-1787 / 2291 / W).